A 264-amino-acid polypeptide reads, in one-letter code: COP9 signalosome complex subunit 7b (264 aa).

N-acetylalanine is present on Ala-2. The PCI domain occupies Ala-2–Gly-159. Residues Arg-194–Glu-237 are a coiled coil. Polar residues predominate over residues Thr-223–Glu-232. Residues Thr-223–His-264 are disordered. Basic and acidic residues predominate over residues Leu-235–Gln-248.

Belongs to the CSN7/EIF3M family. CSN7 subfamily. In terms of assembly, component of the CSN complex, composed of COPS1/GPS1, COPS2, COPS3, COPS4, COPS5, COPS6, COPS7 (COPS7A or COPS7B) and COPS8 and COPS9. In the complex, it probably interacts directly with COPS1, COPS2, COPS4, COPS5, COPS6 and COPS8. Interacts with EIF3S6.

The protein resides in the cytoplasm. It is found in the nucleus. Functionally, component of the COP9 signalosome complex (CSN), a complex involved in various cellular and developmental processes. The CSN complex is an essential regulator of the ubiquitin (Ubl) conjugation pathway by mediating the deneddylation of the cullin subunits of SCF-type E3 ligase complexes, leading to decrease the Ubl ligase activity of SCF-type complexes such as SCF, CSA or DDB2. The complex is also involved in phosphorylation of p53/TP53, JUN, I-kappa-B-alpha/NFKBIA, ITPK1 and IRF8/ICSBP, possibly via its association with CK2 and PKD kinases. CSN-dependent phosphorylation of TP53 and JUN promotes and protects degradation by the Ubl system, respectively. The polypeptide is COP9 signalosome complex subunit 7b (Cops7b) (Mus musculus (Mouse)).